Consider the following 453-residue polypeptide: MFLQNLFLGFLAVVCANAQFAEFTAFDGKFDFKEHLTSRSPYHKPYFYGPSIDFPTTCKIKQVHTLQRHGSRNPTGGNAAFDAVGIANFQQRLLNGSVPIDYSVSGNPLSFVPTWTPVIEAANADALSSSGRVELFDMGRQFYERYHELFNASTYNIYTAAQQRVVDSALWYGYGMFGEDVHNFTNYILVSENATAGSNSLSSYNACPASDADDFTTPALEAWRNVYMPPIRQRLNPYFSNYNLTNDDILNLYGICSYEIALQDYSEFCKLFNSVDFLNFEYEGDLSFSYGMGNSVKWGSIFGGAYANSLANSLRSVENNTQQVFFAFTHDANIIPVETALGFFTDNTPENPLPTSYQVHSHSMKASEFVPFAGNLITELFQCEDSKYYVRHLVNEEVFPLSDCGFGPSNTSDGMCELYAYLNSPVRVNGTSNGIQNFDTLCNASAVAAVYPY.

The first 18 residues, 1-18, serve as a signal peptide directing secretion; the sequence is MFLQNLFLGFLAVVCANA. H69 serves as the catalytic Nucleophile. N-linked (GlcNAc...) asparagine glycosylation is found at N95, N151, N183, N193, N243, and N319. D331 acts as the Proton donor in catalysis. N410, N429, and N443 each carry an N-linked (GlcNAc...) asparagine glycan.

This sequence belongs to the histidine acid phosphatase family.

It localises to the secreted. The protein localises to the cell wall. It catalyses the reaction a phosphate monoester + H2O = an alcohol + phosphate. This is Acid phosphatase (pho1) from Schizosaccharomyces pombe (strain 972 / ATCC 24843) (Fission yeast).